The primary structure comprises 283 residues: Endochitinase At2g43620 (283 aa).

Residues 1 to 28 form the signal peptide; sequence MATLRAMLKNAFILFLFTLTIMAKTVFS. Residues 29–66 enclose the Chitin-binding type-1 domain; the sequence is QQCGTTGCAANLCCSRYGYCGTTDAYCGTGCRSGPCSS. Intrachain disulfides connect Cys-31–Cys-42, Cys-36–Cys-48, Cys-41–Cys-55, and Cys-59–Cys-64. The segment at 88–283 is catalytic; the sequence is DTIENVVTPA…GITPGANLSC (196 aa). The Proton donor role is filled by Glu-150. Asn-280 is a glycosylation site (N-linked (GlcNAc...) asparagine).

Belongs to the glycosyl hydrolase 19 family. Chitinase class I subfamily.

The enzyme catalyses Random endo-hydrolysis of N-acetyl-beta-D-glucosaminide (1-&gt;4)-beta-linkages in chitin and chitodextrins.. The protein is Endochitinase At2g43620 of Arabidopsis thaliana (Mouse-ear cress).